The sequence spans 130 residues: Large ribosomal subunit protein bL12 (130 aa).

It belongs to the bacterial ribosomal protein bL12 family. As to quaternary structure, homodimer. Part of the ribosomal stalk of the 50S ribosomal subunit. Forms a multimeric L10(L12)X complex, where L10 forms an elongated spine to which 2 to 4 L12 dimers bind in a sequential fashion. Binds GTP-bound translation factors.

In terms of biological role, forms part of the ribosomal stalk which helps the ribosome interact with GTP-bound translation factors. Is thus essential for accurate translation. This Nostoc punctiforme (strain ATCC 29133 / PCC 73102) protein is Large ribosomal subunit protein bL12.